The sequence spans 234 residues: Adenosine 5'-phosphosulfate reductase (234 aa).

[4Fe-4S] cluster-binding residues include Cys120, Cys121, Cys203, and Cys206. Cys229 (nucleophile; cysteine thiosulfonate intermediate) is an active-site residue.

It belongs to the PAPS reductase family. CysH subfamily. [4Fe-4S] cluster is required as a cofactor.

Its subcellular location is the cytoplasm. It catalyses the reaction [thioredoxin]-disulfide + sulfite + AMP + 2 H(+) = adenosine 5'-phosphosulfate + [thioredoxin]-dithiol. It participates in sulfur metabolism; hydrogen sulfide biosynthesis; sulfite from sulfate. Catalyzes the formation of sulfite from adenosine 5'-phosphosulfate (APS) using thioredoxin as an electron donor. The chain is Adenosine 5'-phosphosulfate reductase from Bacillus cereus (strain Q1).